The sequence spans 1090 residues: MSVYHLPTLLNPLVNAIFNCPEPERSPLKKLFANLKTRRFILLAPPSEYLLNYHDVKSKLPLHDLCYNAEFINSYILLMTENSYINTNSRDSHYETLDGKTVVIQWKNNVIHALNGFHIRRRLKILETKILPNFNDYFEGAADFIILFIDQPLNCEFVPNDYLQCFHNYEKIPKNAHAMPNLSIDSFQQERSSFENILHIHPARLTQLGQLFSSYRTLAPGDDPSRSIFESIVQQAFDGMKSDSLFKNFSNLYDLIHDYFELNLYDDIWSRLTTHFKGHEVDTEKYKYFSVNQLLTDFYSKDYGEFELHDITLIERRLHLASKHLQKLALTHSYAEKSKILVETLQKLSGTTEMDSHQLELPDGLNNMTMDADTLISLFVLVVCRSEQKHLKSHLYYLQNFSNNSSSTKFGILGYAVSTLEAVVCYFEDFNKNTGNVAKANTLCEKTKNLLDKLSCENPTNEVEDLATYKDILTYRNEQGQSILSICITNHKNYILLDILSEYETDFPVEDLLEDETIDGSTLLIESIKAGNLEAAKVLIKIMLFNCTEEELVSYINKTDKYARTVAHYLTHEMDILKSIGNYIDWKRKNSSGQTPLFSIFRSYDQPNYEEMVKTAFDIANTWYRKHNSLFDYLDHTDNKGNSLLHVLKTNIPILLQLTKLDINEENYKGLTPLMVYVKYKRLSNIDAITKDRRLILEKVQNSTFFTCFDYAKDHSVLSKIGERGVKDSLFGLIYFHSLRYHNLNATTNITSVSNAEKPFATTVINMKTIQGLLRSILKDNPFTFLPLNTYIDEISHLNRSDLTIIGKTDVTSLLHELTNCFNVLLFLKKIPENLFTDEASILYWMRINTSKRNQKPSGKENPKTMEPEEINMIQSFLRFNFDEISSFKASLNILRKVLIFINLKSDDFEDAYKGLNEMGRKLINSEASSAFKGIITNHNMFSELSLAELLENVRFLEQCTIQLSSFVQIILFEKIPNWWKHYGEFLALHKSYRKAFPNMVKPKSASDTSSRAPLGGFIETKREQSEQRLAVQIKASSKMLKELGSEIFVAHERLAEELSNYMEFRKACLDQRSLVAFATTNISVLQECV.

A VPS9 domain is found at 289–436; the sequence is FSVNQLLTDF…FEDFNKNTGN (148 aa).

It belongs to the UPF0507 family.

This chain is UPF0507 protein EC1118_1M3_1541g, found in Saccharomyces cerevisiae (strain Lalvin EC1118 / Prise de mousse) (Baker's yeast).